A 97-amino-acid chain; its full sequence is Carboxypeptidase inhibitor (97 aa).

The first 22 residues, 1 to 22 (MAATLPVFAVVFFAMVLASSQA), serve as a signal peptide directing secretion.

Its subcellular location is the secreted. In terms of biological role, potent competitive inhibitor of metallo-carboxypeptidases CPA1, CPA2, CPB, CPN, and TAF1a. Also inhibits human CPA4. Accelerates fibrinolysis in vitro and may contribute to the maintenance of host blood liquidity during feeding. This chain is Carboxypeptidase inhibitor, found in Rhipicephalus bursa (Tick).